A 342-amino-acid chain; its full sequence is Dihydroorotate dehydrogenase (quinone) (342 aa).

FMN-binding positions include 61 to 65 (AGLDK) and Thr-85. Residue Lys-65 coordinates substrate. Residue 110–114 (NRMGF) coordinates substrate. FMN is bound by residues Asn-138 and Asn-171. Residue Asn-171 coordinates substrate. The active-site Nucleophile is Ser-174. Asn-176 is a binding site for substrate. The FMN site is built by Lys-216 and Thr-244. A substrate-binding site is contributed by 245-246 (NT). Residues Gly-267, Gly-296, and 317–318 (YS) contribute to the FMN site.

It belongs to the dihydroorotate dehydrogenase family. Type 2 subfamily. As to quaternary structure, monomer. FMN is required as a cofactor.

The protein localises to the cell membrane. It carries out the reaction (S)-dihydroorotate + a quinone = orotate + a quinol. It functions in the pathway pyrimidine metabolism; UMP biosynthesis via de novo pathway; orotate from (S)-dihydroorotate (quinone route): step 1/1. Functionally, catalyzes the conversion of dihydroorotate to orotate with quinone as electron acceptor. This is Dihydroorotate dehydrogenase (quinone) from Pseudomonas aeruginosa (strain UCBPP-PA14).